The sequence spans 254 residues: Decaprenylphosphoryl-2-keto-beta-D-erythro-pentose reductase (254 aa).

An NAD(+)-binding site is contributed by Asp-67. Catalysis depends on Tyr-160, which acts as the Proton acceptor. Lys-164 is a binding site for NAD(+).

It belongs to the short-chain dehydrogenases/reductases (SDR) family. As to quaternary structure, interacts with DprE1 to form an epimerase complex.

It is found in the periplasm. The enzyme catalyses trans,octa-cis-decaprenylphospho-beta-D-arabinofuranose + NAD(+) = trans,octa-cis-decaprenylphospho-beta-D-erythro-pentofuranosid-2-ulose + NADH + H(+). The protein operates within cell wall biogenesis; cell wall polysaccharide biosynthesis. In terms of biological role, component of the DprE1-DprE2 complex that catalyzes the 2-step epimerization of decaprenyl-phospho-ribose (DPR) to decaprenyl-phospho-arabinose (DPA), a key precursor that serves as the arabinose donor required for the synthesis of cell-wall arabinans. DprE1 catalyzes the first step of epimerization, namely FAD-dependent oxidation of the C2' hydroxyl of DPR to yield the keto intermediate decaprenyl-phospho-2'-keto-D-arabinose (DPX). The intermediate DPX is then transferred to DprE2 subunit of the epimerase complex, most probably through a 'substrate channel' at the interface of DprE1-DprE2 complex. DprE2 then catalyzes the second step of epimerization, the NAD(+)-dependent reduction of DPX that leads to the formation of DPA. The protein is Decaprenylphosphoryl-2-keto-beta-D-erythro-pentose reductase of Mycolicibacterium smegmatis (strain ATCC 700084 / mc(2)155) (Mycobacterium smegmatis).